A 287-amino-acid chain; its full sequence is Large ribosomal subunit protein uL2 (287 aa).

Residues 221–287 (RGSVMNPCDH…SKRSRGGRDS (67 aa)) form a disordered region. The segment covering 258-287 (KTRKKNKPSNKLVVRRRRRISKRSRGGRDS) has biased composition (basic residues).

It belongs to the universal ribosomal protein uL2 family. As to quaternary structure, part of the 50S ribosomal subunit. Forms a bridge to the 30S subunit in the 70S ribosome.

Functionally, one of the primary rRNA binding proteins. Required for association of the 30S and 50S subunits to form the 70S ribosome, for tRNA binding and peptide bond formation. It has been suggested to have peptidyltransferase activity; this is somewhat controversial. Makes several contacts with the 16S rRNA in the 70S ribosome. This chain is Large ribosomal subunit protein uL2, found in Prochlorococcus marinus subsp. pastoris (strain CCMP1986 / NIES-2087 / MED4).